A 143-amino-acid chain; its full sequence is Hypoxic response protein 1 (143 aa).

2 CBS domains span residues 8–65 (MNAG…GLDP) and 73–131 (LARD…IVQF). A disulfide bridge links cysteine 14 with cysteine 39. The Zn(2+) site is built by histidine 97 and histidine 122.

Homodimer.

It localises to the secreted. Unlike some other CBS-domain containing proteins does not seem to bind AMP. The chain is Hypoxic response protein 1 (hrp1) from Mycobacterium tuberculosis (strain CDC 1551 / Oshkosh).